Reading from the N-terminus, the 200-residue chain is Superoxide dismutase [Mn] (200 aa).

The Mn(2+) site is built by histidine 27, histidine 77, aspartate 160, and histidine 164.

The protein belongs to the iron/manganese superoxide dismutase family. In terms of assembly, homodimer. The cofactor is Mn(2+).

It catalyses the reaction 2 superoxide + 2 H(+) = H2O2 + O2. In terms of biological role, destroys superoxide anion radicals which are normally produced within the cells and which are toxic to biological systems. This is Superoxide dismutase [Mn] (sodB) from Rhizobium meliloti (strain 1021) (Ensifer meliloti).